The primary structure comprises 237 residues: Ribonuclease PH (237 aa).

Phosphate contacts are provided by residues R86 and 124 to 126; that span reads GTR.

It belongs to the RNase PH family. As to quaternary structure, homohexameric ring arranged as a trimer of dimers.

The catalysed reaction is tRNA(n+1) + phosphate = tRNA(n) + a ribonucleoside 5'-diphosphate. Functionally, phosphorolytic 3'-5' exoribonuclease that plays an important role in tRNA 3'-end maturation. Removes nucleotide residues following the 3'-CCA terminus of tRNAs; can also add nucleotides to the ends of RNA molecules by using nucleoside diphosphates as substrates, but this may not be physiologically important. Probably plays a role in initiation of 16S rRNA degradation (leading to ribosome degradation) during starvation. The chain is Ribonuclease PH from Shewanella sp. (strain ANA-3).